We begin with the raw amino-acid sequence, 209 residues long: Nucleoside triphosphate pyrophosphatase (209 aa).

The Proton acceptor role is filled by D74.

This sequence belongs to the Maf family. A divalent metal cation serves as cofactor.

The protein resides in the cytoplasm. The catalysed reaction is a ribonucleoside 5'-triphosphate + H2O = a ribonucleoside 5'-phosphate + diphosphate + H(+). The enzyme catalyses a 2'-deoxyribonucleoside 5'-triphosphate + H2O = a 2'-deoxyribonucleoside 5'-phosphate + diphosphate + H(+). In terms of biological role, nucleoside triphosphate pyrophosphatase. May have a dual role in cell division arrest and in preventing the incorporation of modified nucleotides into cellular nucleic acids. In Neorickettsia sennetsu (strain ATCC VR-367 / Miyayama) (Ehrlichia sennetsu), this protein is Nucleoside triphosphate pyrophosphatase.